Consider the following 389-residue polypeptide: Na(+)/H(+) antiporter NhaA 1 (389 aa).

11 helical membrane passes run 12 to 32 (VLNE…ALLV), 62 to 82 (FLLW…GLEL), 97 to 117 (IVLP…LFAL), 128 to 148 (GWAI…MMCG), 157 to 177 (IFLL…IAIF), 184 to 204 (IVAF…NLLG), 220 to 240 (ISVL…AFFI), 260 to 280 (FWIA…VNLS), 282 to 302 (IDIG…LFVG), 331 to 351 (LYGV…IDGL), and 365 to 385 (LAIL…LKFF).

Belongs to the NhaA Na(+)/H(+) (TC 2.A.33) antiporter family.

The protein resides in the cell inner membrane. The enzyme catalyses Na(+)(in) + 2 H(+)(out) = Na(+)(out) + 2 H(+)(in). Na(+)/H(+) antiporter that extrudes sodium in exchange for external protons. In Campylobacter jejuni (strain RM1221), this protein is Na(+)/H(+) antiporter NhaA 1.